Here is a 1407-residue protein sequence, read N- to C-terminus: DNA-directed RNA polymerase subunit beta' (1407 aa).

Cys70, Cys72, Cys85, and Cys88 together coordinate Zn(2+). Asp460, Asp462, and Asp464 together coordinate Mg(2+). Zn(2+)-binding residues include Cys814, Cys888, Cys895, and Cys898. Lys972 is modified (N6-acetyllysine).

Belongs to the RNA polymerase beta' chain family. The RNAP catalytic core consists of 2 alpha, 1 beta, 1 beta' and 1 omega subunit. When a sigma factor is associated with the core the holoenzyme is formed, which can initiate transcription. Mg(2+) serves as cofactor. The cofactor is Zn(2+).

It catalyses the reaction RNA(n) + a ribonucleoside 5'-triphosphate = RNA(n+1) + diphosphate. DNA-dependent RNA polymerase catalyzes the transcription of DNA into RNA using the four ribonucleoside triphosphates as substrates. This is DNA-directed RNA polymerase subunit beta' from Shigella flexneri serotype 5b (strain 8401).